The chain runs to 444 residues: DNA repair protein RadA (444 aa).

The segment at 10–27 (CQECGYKSVKWLGKCPSC) adopts a C4-type zinc-finger fold. 91–98 (GEPGIGKS) provides a ligand contact to ATP. Positions 247–251 (KNRFG) match the RadA KNRFG motif motif. Residues 345 to 444 (DVFVNVAGGM…HIQEAIEVLF (100 aa)) form a lon-protease-like region.

The protein belongs to the RecA family. RadA subfamily.

Functionally, DNA-dependent ATPase involved in processing of recombination intermediates, plays a role in repairing DNA breaks. Stimulates the branch migration of RecA-mediated strand transfer reactions, allowing the 3' invading strand to extend heteroduplex DNA faster. Binds ssDNA in the presence of ADP but not other nucleotides, has ATPase activity that is stimulated by ssDNA and various branched DNA structures, but inhibited by SSB. Does not have RecA's homology-searching function. This Aquifex aeolicus (strain VF5) protein is DNA repair protein RadA.